Consider the following 37-residue polypeptide: Serrulin (37 aa).

The interval 16–37 (FGGGGIGGGGFGGGYGGGKIKG) is disordered. Lys-36 is modified (lysine amide).

Expressed in hemocytes (at protein level).

Its subcellular location is the secreted. Antimicrobial protein with activity against Gram-positive and Gram-negative bacteria, filamentous fungus, and yeast. Was tested against Micrococcus luteus A270 (MIC=0.5-1 uM), Echerichia coli SBS 363 (MIC=9-16 uM), Pseudomonas aeruginosa (MIC=0.01-0.3 uM), Aspergillus niger (MIC=3-6 uM), and Candida albicans MDM8 (MIC=1.5-3 uM). Has no hemolytic activity against human erythrocytes. The chain is Serrulin from Tityus serrulatus (Brazilian scorpion).